Reading from the N-terminus, the 342-residue chain is Fatty acid desaturase 6 (342 aa).

2 helical membrane passes run 39–59 and 63–83; these read GVDC…FLCL and NILA…TLTV. Residues 87–91 carry the Histidine box-1 motif; the sequence is HLATH. Residues 100–120 form a helical membrane-spanning segment; it reads WSKILMIFFLEVCTAFSAEFA. The Histidine box-2 motif lies at 124–128; the sequence is HVNLH. The next 2 membrane-spanning stretches (helical) occupy residues 151–171 and 185–205; these read YVYM…VALE and LGFI…VSGF. The Histidine box-3 signature appears at 277–281; the sequence is HVEHH.

It belongs to the fatty acid desaturase type 1 family.

It is found in the membrane. It participates in lipid metabolism; fatty acid metabolism. The protein is Fatty acid desaturase 6 (Fads6) of Mus musculus (Mouse).